The primary structure comprises 144 residues: Large ribosomal subunit protein uL16 (144 aa).

The protein belongs to the universal ribosomal protein uL16 family. Part of the 50S ribosomal subunit.

Binds 23S rRNA and is also seen to make contacts with the A and possibly P site tRNAs. This is Large ribosomal subunit protein uL16 from Enterococcus faecalis (strain ATCC 700802 / V583).